Consider the following 386-residue polypeptide: Chorismate synthase (386 aa).

Residues R45 and R51 each coordinate NADP(+). FMN contacts are provided by residues 131–133 (RTS), 251–252 (QG), S294, 309–313 (KPIPS), and R335.

This sequence belongs to the chorismate synthase family. Homotetramer. FMNH2 serves as cofactor.

The catalysed reaction is 5-O-(1-carboxyvinyl)-3-phosphoshikimate = chorismate + phosphate. It functions in the pathway metabolic intermediate biosynthesis; chorismate biosynthesis; chorismate from D-erythrose 4-phosphate and phosphoenolpyruvate: step 7/7. Functionally, catalyzes the anti-1,4-elimination of the C-3 phosphate and the C-6 proR hydrogen from 5-enolpyruvylshikimate-3-phosphate (EPSP) to yield chorismate, which is the branch point compound that serves as the starting substrate for the three terminal pathways of aromatic amino acid biosynthesis. This reaction introduces a second double bond into the aromatic ring system. This Clostridium tetani (strain Massachusetts / E88) protein is Chorismate synthase.